The following is a 135-amino-acid chain: ATP synthase epsilon chain (135 aa).

It belongs to the ATPase epsilon chain family. F-type ATPases have 2 components, CF(1) - the catalytic core - and CF(0) - the membrane proton channel. CF(1) has five subunits: alpha(3), beta(3), gamma(1), delta(1), epsilon(1). CF(0) has three main subunits: a, b and c.

The protein localises to the cell inner membrane. Functionally, produces ATP from ADP in the presence of a proton gradient across the membrane. This is ATP synthase epsilon chain from Allorhizobium ampelinum (strain ATCC BAA-846 / DSM 112012 / S4) (Agrobacterium vitis (strain S4)).